The primary structure comprises 3658 residues: Serine/threonine-protein kinase SMG1 (3658 aa).

2 disordered regions span residues M1–R99 and F116–S142. Over residues N24 to A33 the composition is skewed to polar residues. Composition is skewed to basic and acidic residues over residues Q67–G84 and A127–E136. K171 is subject to N6-acetyllysine. Positions R1281–S1864 constitute an FAT domain. One copy of the HEAT repeat lies at A1815–S1850. Residues E1896–L1917 form a disordered region. Residues V2122–F2461 form the PI3K/PI4K catalytic domain. Residues I2128 to K2134 form a G-loop region. Residues G2330 to N2338 form a catalytic loop region. The activation loop stretch occupies residues H2350 to T2374. T3547 is subject to Phosphothreonine. A phosphoserine mark is found at S3553 and S3567. Over residues A3565 to P3576 the composition is skewed to polar residues. A disordered region spans residues A3565–K3588. T3570 and T3574 each carry phosphothreonine. An FATC domain is found at R3626 to V3658.

It belongs to the PI3/PI4-kinase family. In terms of assembly, component of the SMG1C complex composed of SMG1, SMG8 and SMG9; the recruitment of SMG8 to SMG1 N-terminus induces a large conformational change in the SMG1 C-terminal head domain containing the catalytic domain. Component of the transient SURF (SMG1-UPF1-eRF1-eRF3) complex. Part of a complex composed of SMG1, DHX34 and UPF1; within the complex DHX34 acts as a scaffolding protein to facilitate SMG1 phosphorylation of UPF1. Interacts with PRKCI. Interacts with TELO2 and TTI1. Interacts with RUVBL1 and RUVBL2. Interacts with DHX34 (via C-terminus); the interaction is RNA-independent. Mn(2+) serves as cofactor. Autophosphorylated.

It localises to the nucleus. The protein resides in the cytoplasm. The catalysed reaction is L-seryl-[protein] + ATP = O-phospho-L-seryl-[protein] + ADP + H(+). It carries out the reaction L-threonyl-[protein] + ATP = O-phospho-L-threonyl-[protein] + ADP + H(+). Its activity is regulated as follows. Inhibited by caffeine, LY294002 and wortmannin. Functionally, serine/threonine protein kinase involved in both mRNA surveillance and genotoxic stress response pathways. Recognizes the substrate consensus sequence [ST]-Q. Plays a central role in nonsense-mediated decay (NMD) of mRNAs containing premature stop codons by phosphorylating UPF1/RENT1. Recruited by release factors to stalled ribosomes together with SMG8 and SMG9 (forming the SMG1C protein kinase complex), and UPF1 to form the transient SURF (SMG1-UPF1-eRF1-eRF3) complex. In EJC-dependent NMD, the SURF complex associates with the exon junction complex (EJC) through UPF2 and allows the formation of an UPF1-UPF2-UPF3 surveillance complex which is believed to activate NMD. Also acts as a genotoxic stress-activated protein kinase that displays some functional overlap with ATM. Can phosphorylate p53/TP53 and is required for optimal p53/TP53 activation after cellular exposure to genotoxic stress. Its depletion leads to spontaneous DNA damage and increased sensitivity to ionizing radiation (IR). May activate PRKCI but not PRKCZ. The polypeptide is Serine/threonine-protein kinase SMG1 (Mus musculus (Mouse)).